We begin with the raw amino-acid sequence, 291 residues long: 3-methyl-2-oxobutanoate hydroxymethyltransferase (291 aa).

Positions 1-10 (MTQLSAAQTP) are enriched in polar residues. A disordered region spans residues 1–20 (MTQLSAAQTPQPKPADGNRA). Residues Asp71 and Asp110 each contribute to the Mg(2+) site. 3-methyl-2-oxobutanoate contacts are provided by residues 71–72 (DS), Asp110, and Lys140. Glu142 lines the Mg(2+) pocket. Glu208 functions as the Proton acceptor in the catalytic mechanism.

This sequence belongs to the PanB family. As to quaternary structure, homodecamer; pentamer of dimers. It depends on Mg(2+) as a cofactor.

The protein resides in the cytoplasm. It carries out the reaction 3-methyl-2-oxobutanoate + (6R)-5,10-methylene-5,6,7,8-tetrahydrofolate + H2O = 2-dehydropantoate + (6S)-5,6,7,8-tetrahydrofolate. It functions in the pathway cofactor biosynthesis; (R)-pantothenate biosynthesis; (R)-pantoate from 3-methyl-2-oxobutanoate: step 1/2. In terms of biological role, catalyzes the reversible reaction in which hydroxymethyl group from 5,10-methylenetetrahydrofolate is transferred onto alpha-ketoisovalerate to form ketopantoate. The chain is 3-methyl-2-oxobutanoate hydroxymethyltransferase from Streptomyces coelicolor (strain ATCC BAA-471 / A3(2) / M145).